The primary structure comprises 453 residues: Phosphoglucosamine mutase (453 aa).

Ser102 acts as the Phosphoserine intermediate in catalysis. Ser102, Asp244, Asp246, and Asp248 together coordinate Mg(2+). Phosphoserine is present on Ser102.

The protein belongs to the phosphohexose mutase family. Mg(2+) serves as cofactor. Post-translationally, activated by phosphorylation.

The catalysed reaction is alpha-D-glucosamine 1-phosphate = D-glucosamine 6-phosphate. In terms of biological role, catalyzes the conversion of glucosamine-6-phosphate to glucosamine-1-phosphate. This Pelobacter propionicus (strain DSM 2379 / NBRC 103807 / OttBd1) protein is Phosphoglucosamine mutase.